The primary structure comprises 880 residues: Probable receptor-like protein kinase At5g38990 (880 aa).

The first 21 residues, 1 to 21, serve as a signal peptide directing secretion; that stretch reads MICHVLVIFTILVSAVVDATA. Residues 22-440 are Extracellular-facing; that stretch reads SYEPTDVFLI…GKGKSSHVLP (419 aa). Residues N46, N136, N158, N210, N256, N263, N297, and N324 are each glycosylated (N-linked (GlcNAc...) asparagine). The chain crosses the membrane as a helical span at residues 441–461; sequence IIIAVVGSAVALAFFVLVVVL. Topologically, residues 462–880 are cytoplasmic; it reads VVMKRKKKSN…FSEINEPKAR (419 aa). A disordered region spans residues 471-505; that stretch reads NESSVDTTNKPSTNSSWGPLLHGTGSTNTKSASSL. Polar residues-rich tracts occupy residues 472–487 and 494–505; these read ESSVDTTNKPSTNSSW and TGSTNTKSASSL. A Protein kinase domain is found at 525-810; the sequence is FEEKLIIGVG…EFALQLHETA (286 aa). ATP-binding positions include 531–539 and K554; that span reads IGVGGFGSV. D653 (proton acceptor) is an active-site residue. Residues 820–846 form a disordered region; that stretch reads LDLMPSGEVGTTTDGEDDLFSRTTGHV.

This sequence belongs to the protein kinase superfamily. Ser/Thr protein kinase family.

It is found in the membrane. The polypeptide is Probable receptor-like protein kinase At5g38990 (Arabidopsis thaliana (Mouse-ear cress)).